We begin with the raw amino-acid sequence, 822 residues long: Tubulin polyglutamylase TTLL6 (822 aa).

The tract at residues 1 to 24 (MLQCLTSESEEGAEEREESSTEDL) is disordered. The segment covering 8-24 (ESEEGAEEREESSTEDL) has biased composition (acidic residues). A TTL domain is found at 57–400 (KKRLVINLSN…GNCDKKKVLE (344 aa)). Residues K174, 180–181 (QG), 202–205 (QLYI), and 215–217 (KFD) each bind ATP. Q180 is a binding site for a protein. R241 contacts L-glutamate. 263–264 (TN) contacts ATP. The L-glutamate site is built by Y265, S266, and K283. The Mg(2+) site is built by D346, E359, and N361. H362 contacts a protein. The tract at residues 371–450 (KLDKEVKDSL…CGGFRLIYPG (80 aa)) is c-MTBD region. K377 serves as a coordination point for L-glutamate. Disordered stretches follow at residues 736 to 772 (PLFPAPKSQYPTLSKERCPHSRSSSRKKEMNSPSVFV) and 791 to 822 (TQARLDPRPSRSHSGTTTRDSSTQDPKHTATA). Positions 802 to 814 (SHSGTTTRDSSTQ) are enriched in polar residues.

The protein belongs to the tubulin--tyrosine ligase family. In terms of assembly, found in a complex with CEP41. Requires Mg(2+) as cofactor. As to expression, highly expressed in testis. Expressed in brain, heart, kidney, liver, lung, muscle and trachea. In the brain, specifically expressed in ependymal cilia.

It is found in the cytoplasm. The protein localises to the cytoskeleton. Its subcellular location is the cilium axoneme. The protein resides in the cilium basal body. The enzyme catalyses L-glutamyl-[protein] + L-glutamate + ATP = gamma-L-glutamyl-L-glutamyl-[protein] + ADP + phosphate + H(+). It catalyses the reaction (L-glutamyl)(n)-gamma-L-glutamyl-L-glutamyl-[protein] + L-glutamate + ATP = (L-glutamyl)(n+1)-gamma-L-glutamyl-L-glutamyl-[protein] + ADP + phosphate + H(+). Its function is as follows. Polyglutamylase which modifies both tubulin and non-tubulin proteins, generating alpha-linked polyglutamate side chains on the gamma-carboxyl group of specific glutamate residues of target proteins. Preferentially mediates ATP-dependent long polyglutamate chain elongation over the initiation step of the polyglutamylation reaction. Preferentially modifies the alpha-tubulin tail over a beta-tail. Promotes tubulin polyglutamylation which stimulates spastin/SPAST-mediated microtubule severing, thereby regulating microtubule functions. Mediates microtubule polyglutamylation in primary cilia axoneme which is important for ciliary structural formation and motility. Mediates microtubule polyglutamylation in motile cilia, necessary for the regulation of ciliary coordinated beating. Polyglutamylates non-tubulin protein nucleotidyltransferase CGAS, leading to CGAS DNA-binding inhibition, thereby preventing antiviral defense response. The chain is Tubulin polyglutamylase TTLL6 from Mus musculus (Mouse).